We begin with the raw amino-acid sequence, 293 residues long: Porphobilinogen deaminase (293 aa).

The residue at position 235 (Cys-235) is an S-(dipyrrolylmethanemethyl)cysteine.

The protein belongs to the HMBS family. Monomer. Dipyrromethane is required as a cofactor.

It catalyses the reaction 4 porphobilinogen + H2O = hydroxymethylbilane + 4 NH4(+). It functions in the pathway porphyrin-containing compound metabolism; protoporphyrin-IX biosynthesis; coproporphyrinogen-III from 5-aminolevulinate: step 2/4. Its function is as follows. Tetrapolymerization of the monopyrrole PBG into the hydroxymethylbilane pre-uroporphyrinogen in several discrete steps. In Ruminiclostridium cellulolyticum (strain ATCC 35319 / DSM 5812 / JCM 6584 / H10) (Clostridium cellulolyticum), this protein is Porphobilinogen deaminase.